Here is a 519-residue protein sequence, read N- to C-terminus: uncharacterized protein (519 aa).

Helical transmembrane passes span 141 to 161 (GSSL…ANVF), 202 to 222 (LGET…WALA), 385 to 405 (FVVR…PFVG), and 433 to 453 (TVVP…AELV).

Its subcellular location is the cell membrane. This is an uncharacterized protein from Sinorhizobium fredii (strain NBRC 101917 / NGR234).